The primary structure comprises 396 residues: Probable sugar efflux transporter (396 aa).

12 consecutive transmembrane segments (helical) span residues V15–L35, V50–L70, L81–F101, V103–A123, A136–I156, T169–P189, P209–Y229, F246–G266, L275–A295, L301–V321, V333–G353, and T364–F384.

It belongs to the major facilitator superfamily. SotB (TC 2.A.1.2) family.

The protein localises to the cell inner membrane. Involved in the efflux of sugars. The physiological role may be the reduction of the intracellular concentration of toxic sugars or sugar metabolites. The sequence is that of Probable sugar efflux transporter from Salmonella arizonae (strain ATCC BAA-731 / CDC346-86 / RSK2980).